Reading from the N-terminus, the 216-residue chain is Leucyl/phenylalanyl-tRNA--protein transferase (216 aa).

This sequence belongs to the L/F-transferase family.

Its subcellular location is the cytoplasm. It catalyses the reaction N-terminal L-lysyl-[protein] + L-leucyl-tRNA(Leu) = N-terminal L-leucyl-L-lysyl-[protein] + tRNA(Leu) + H(+). It carries out the reaction N-terminal L-arginyl-[protein] + L-leucyl-tRNA(Leu) = N-terminal L-leucyl-L-arginyl-[protein] + tRNA(Leu) + H(+). The catalysed reaction is L-phenylalanyl-tRNA(Phe) + an N-terminal L-alpha-aminoacyl-[protein] = an N-terminal L-phenylalanyl-L-alpha-aminoacyl-[protein] + tRNA(Phe). Functionally, functions in the N-end rule pathway of protein degradation where it conjugates Leu, Phe and, less efficiently, Met from aminoacyl-tRNAs to the N-termini of proteins containing an N-terminal arginine or lysine. The sequence is that of Leucyl/phenylalanyl-tRNA--protein transferase from Maricaulis maris (strain MCS10) (Caulobacter maris).